Here is a 98-residue protein sequence, read N- to C-terminus: Small ribosomal subunit protein uS17 (98 aa).

The protein belongs to the universal ribosomal protein uS17 family. Part of the 30S ribosomal subunit.

One of the primary rRNA binding proteins, it binds specifically to the 5'-end of 16S ribosomal RNA. The polypeptide is Small ribosomal subunit protein uS17 (Carboxydothermus hydrogenoformans (strain ATCC BAA-161 / DSM 6008 / Z-2901)).